The chain runs to 233 residues: Large ribosomal subunit protein uL1 (233 aa).

This sequence belongs to the universal ribosomal protein uL1 family. In terms of assembly, part of the 50S ribosomal subunit.

Functionally, binds directly to 23S rRNA. The L1 stalk is quite mobile in the ribosome, and is involved in E site tRNA release. Protein L1 is also a translational repressor protein, it controls the translation of the L11 operon by binding to its mRNA. The protein is Large ribosomal subunit protein uL1 of Thermotoga sp. (strain RQ2).